The following is a 1250-amino-acid chain: MAKKFNYKLPSMVALTLVGSAVTAHQVQAAETTQDQTTNKNVLDSNKVKATTEQAKAEVKNPTQNISGTQVYQDPAIVQPKTANNKTGNAQVSQKVDTAQVNGDTRANQSATTNNTQPVAKSTSTTAPKTNTNVTNAGYSLVDDEDDNSENQINPELIKSAAKPAALETQYKAAAPKAATTSAPKAKTEATPKVTTFSASAQPRSVAATPKTSLPKYKPQVNSSINDYIRKNNLKAPKIEEDYTSYFPKYAYRNGVGRPEGIVVHDTANDRSTINGEISYMKNNYQNAFVHAFVDGDRIIETAPTDYLSWGVGAVGNPRFINVEIVHTHDYASFARSMNNYADYAATQLQYYGLKPDSAEYDGNGTVWTHYAVSKYLGGTDHADPHGYLRSHNYSYDQLYDLINEKYLIKMGKVAPWGTQSTTTPTTPSKPSTGKLTVAANNGVAQIKPTNSGLYTTVYDKTGKATNEVQKTFAVSKTATLGNQKFYLVQDYNSGNKFGWVKEGDVVYNTAKSPVNVNQSYSIKPGTKLYTVPWGTSKQVAGSVSGSGNQTFKASKQQQIDKSIYLYGSVNGKSGWVSKAYLVDTAKPTPTPTPKPSTPTTNNKLTVSSLNGVAQINAKNNGLFTTVYDKTGKPTKEVQKTFAVTKEASLGGNKFYLVKDYNSPTLIGWVKQGDVIYNNAKSPVNVMQTYTVKPGTKLYSVPWGTYKQEAGAVSGTGNQTFKATKQQQIDKSIYLFGTVNGKSGWVSKAYLAVPAAPKKAVAQPKTAVKAYTVTKPQTTQTVSKIAQVKPNNTGIRASVYEKTAKNGAKYADRTFYVTKERAHGNETYVLLNNTSHNIPLGWFNVKDLNVQNLGKEVKTTQKYTVNKSNNGLSMVPWGTKNQVILTGNNIAQGTFNATKQVSVGKDVYLYGTINNRTGWVNAKDLTAPTAVKPTTSAAKDYNYTYVIKNGNGYYYVTPNSDTAKYSLKAFNEQPFAVVKEQVINEQTWYYGKLSNGKLAWIKSTDLAKELIKYNQTGMTLNQVAQIQAGLQYKPQVQRVPGKWTDANFNDVKHAMDTKRLAQDPALKYQFLRLDQPQNISIDKINQFLKGKGVLENQGAAFNKAAQMYGINEVYLISHALLETGNGTSQLAKGADVVNNKVVTNSNTKYHNVFGIAAYDNDPLREGIKYAKQAGWDTVSKAIVGGAKFIGNSYVKAGQNTLYKMRWNPAHPGTHQYATDIDWANINAKIIKGYYDKIGEVGKYFDIPQYK.

Residues 1–29 (MAKKFNYKLPSMVALTLVGSAVTAHQVQA) form the signal peptide. Residues 103 to 138 (GDTRANQSATTNNTQPVAKSTSTTAPKTNTNVTNAG) are compositionally biased toward polar residues. Disordered stretches follow at residues 103–151 (GDTR…NSEN) and 173–219 (AAAP…KYKP). The segment covering 173–196 (AAAPKAATTSAPKAKTEATPKVTT) has biased composition (low complexity). Residues 199–769 (ASAQPRSVAA…AVAQPKTAVK (571 aa)) form an N-acetylmuramoyl-L-alanine amidase region. GW domains lie at 437–511 (TVAA…YNTA), 513–587 (SPVN…DTAK), 606–680 (TVSS…YNNA), 682–756 (SPVN…VPAA), 778–853 (TTQT…VQNL), 855–930 (KEVK…APTA), and 937–1011 (AAKD…KELI). The endo-beta-N-acetylglucosaminidase stretch occupies residues 770 to 1250 (AYTVTKPQTT…GKYFDIPQYK (481 aa)).

The protein in the N-terminal section; belongs to the N-acetylmuramoyl-L-alanine amidase 2 family. It in the C-terminal section; belongs to the glycosyl hydrolase 73 family. Oligomer; forms a ring structure at the cell surface which is important for efficient partitioning of daughter cells after cell division. Undergoes proteolytic processing to generate the two extracellular lytic enzymes, probably at the septal region on the cell surface.

It localises to the secreted. The catalysed reaction is Hydrolyzes the link between N-acetylmuramoyl residues and L-amino acid residues in certain cell-wall glycopeptides.. It catalyses the reaction an N(4)-(oligosaccharide-(1-&gt;3)-[oligosaccharide-(1-&gt;6)]-beta-D-Man-(1-&gt;4)-beta-D-GlcNAc-(1-&gt;4)-alpha-D-GlcNAc)-L-asparaginyl-[protein] + H2O = an oligosaccharide-(1-&gt;3)-[oligosaccharide-(1-&gt;6)]-beta-D-Man-(1-&gt;4)-D-GlcNAc + N(4)-(N-acetyl-beta-D-glucosaminyl)-L-asparaginyl-[protein]. Its function is as follows. Endohydrolysis of the di-N-acetylchitobiosyl unit in high-mannose glycopeptides and glycoproteins containing the -[(Man)5(GlcNAc)2]-Asn structure. One N-acetyl-D-glucosamine residue remains attached to the protein; the rest of the oligosaccharide is released intact. Cleaves the peptidoglycan connecting the daughter cells at the end of the cell division cycle, resulting in the separation of the two newly divided cells. Acts as an autolysin in penicillin-induced lysis. The sequence is that of Bifunctional autolysin (atl) from Staphylococcus aureus (strain MSSA476).